The primary structure comprises 262 residues: Hydroxyethylthiazole kinase (262 aa).

M50 lines the substrate pocket. ATP-binding residues include R125 and T171. G198 serves as a coordination point for substrate.

The protein belongs to the Thz kinase family. Mg(2+) serves as cofactor.

The catalysed reaction is 5-(2-hydroxyethyl)-4-methylthiazole + ATP = 4-methyl-5-(2-phosphooxyethyl)-thiazole + ADP + H(+). It participates in cofactor biosynthesis; thiamine diphosphate biosynthesis; 4-methyl-5-(2-phosphoethyl)-thiazole from 5-(2-hydroxyethyl)-4-methylthiazole: step 1/1. Functionally, catalyzes the phosphorylation of the hydroxyl group of 4-methyl-5-beta-hydroxyethylthiazole (THZ). In Citrobacter koseri (strain ATCC BAA-895 / CDC 4225-83 / SGSC4696), this protein is Hydroxyethylthiazole kinase.